Here is a 157-residue protein sequence, read N- to C-terminus: Ribosomal RNA large subunit methyltransferase H (157 aa).

Residues leucine 73, glycine 104, and leucine 123 to leucine 128 each bind S-adenosyl-L-methionine.

It belongs to the RNA methyltransferase RlmH family. As to quaternary structure, homodimer.

It localises to the cytoplasm. It catalyses the reaction pseudouridine(1915) in 23S rRNA + S-adenosyl-L-methionine = N(3)-methylpseudouridine(1915) in 23S rRNA + S-adenosyl-L-homocysteine + H(+). Its function is as follows. Specifically methylates the pseudouridine at position 1915 (m3Psi1915) in 23S rRNA. This chain is Ribosomal RNA large subunit methyltransferase H, found in Xylella fastidiosa (strain M12).